Consider the following 222-residue polypeptide: C-8 sterol isomerase ERG2 (222 aa).

The helical transmembrane segment at 3-23 (FFPLLLLIGVVGYIMNVLFTT) threads the bilayer.

It belongs to the ERG2 family.

Its subcellular location is the endoplasmic reticulum membrane. The enzyme catalyses fecosterol = episterol. It functions in the pathway steroid metabolism; ergosterol biosynthesis; ergosterol from zymosterol: step 2/5. Its activity is regulated as follows. Catalytic activity is inhibited by the morphilines tridemorph, fenpropimorph, and fenpropidin. Functionally, C-8 sterol isomerase; part of the third module of ergosterol biosynthesis pathway that includes the late steps of the pathway. ERG2 catalyzes the reaction which results in unsaturation at C-7 in the B ring of sterols and thus converts fecosterol to episterol. The third module or late pathway involves the ergosterol synthesis itself through consecutive reactions that mainly occur in the endoplasmic reticulum (ER) membrane. Firstly, the squalene synthase ERG9 catalyzes the condensation of 2 farnesyl pyrophosphate moieties to form squalene, which is the precursor of all steroids. Squalene synthase is crucial for balancing the incorporation of farnesyl diphosphate (FPP) into sterol and nonsterol isoprene synthesis. Secondly, the squalene epoxidase ERG1 catalyzes the stereospecific oxidation of squalene to (S)-2,3-epoxysqualene, which is considered to be a rate-limiting enzyme in steroid biosynthesis. Then, the lanosterol synthase ERG7 catalyzes the cyclization of (S)-2,3 oxidosqualene to lanosterol, a reaction that forms the sterol core. In the next steps, lanosterol is transformed to zymosterol through a complex process involving various demethylation, reduction and desaturation reactions. The lanosterol 14-alpha-demethylase ERG11 (also known as CYP51) catalyzes C14-demethylation of lanosterol to produce 4,4'-dimethyl cholesta-8,14,24-triene-3-beta-ol, which is critical for ergosterol biosynthesis. The C-14 reductase ERG24 reduces the C14=C15 double bond of 4,4-dimethyl-cholesta-8,14,24-trienol to produce 4,4-dimethyl-cholesta-8,24-dienol. 4,4-dimethyl-cholesta-8,24-dienol is substrate of the C-4 demethylation complex ERG25-ERG26-ERG27 in which ERG25 catalyzes the three-step monooxygenation required for the demethylation of 4,4-dimethyl and 4alpha-methylsterols, ERG26 catalyzes the oxidative decarboxylation that results in a reduction of the 3-beta-hydroxy group at the C-3 carbon to an oxo group, and ERG27 is responsible for the reduction of the keto group on the C-3. ERG28 has a role as a scaffold to help anchor ERG25, ERG26 and ERG27 to the endoplasmic reticulum and ERG29 regulates the activity of the iron-containing C4-methylsterol oxidase ERG25. Then, the sterol 24-C-methyltransferase ERG6 catalyzes the methyl transfer from S-adenosyl-methionine to the C-24 of zymosterol to form fecosterol. The C-8 sterol isomerase ERG2 catalyzes the reaction which results in unsaturation at C-7 in the B ring of sterols and thus converts fecosterol to episterol. The sterol-C5-desaturase ERG3 then catalyzes the introduction of a C-5 double bond in the B ring to produce 5-dehydroepisterol. The C-22 sterol desaturase ERG5 further converts 5-dehydroepisterol into ergosta-5,7,22,24(28)-tetraen-3beta-ol by forming the C-22(23) double bond in the sterol side chain. Finally, ergosta-5,7,22,24(28)-tetraen-3beta-ol is substrate of the C-24(28) sterol reductase ERG4 to produce ergosterol. The chain is C-8 sterol isomerase ERG2 from Saccharomyces cerevisiae (strain ATCC 204508 / S288c) (Baker's yeast).